The primary structure comprises 302 residues: Nucleoside kinase (302 aa).

Substrate contacts are provided by Asp17, Gln33, Gly43, and Asn47. ATP is bound at residue Gln109. Residues Thr111–Phe113 and Gln163 contribute to the substrate site. Residues Asn186 and Thr214–Gly219 each bind ATP. Asp247 is a substrate binding site. The active-site Proton acceptor is Asp247.

Homodimer. Mg(2+) is required as a cofactor. Mn(2+) serves as cofactor.

The enzyme catalyses cytidine + ATP = CMP + ADP + H(+). The catalysed reaction is guanosine + ATP = GMP + ADP + H(+). It carries out the reaction inosine + ATP = IMP + ADP + H(+). Functionally, catalyzes the phosphorylation of a wide range of nucleosides to yield nucleoside monophosphates. Shows the highest activity for inosine, guanosine and cytidine, but very poor kinase activity with adenosine, thymidine, uridine and xanthosine. ATP is the best phosphate donor, but can also use ITP and GTP. Shows extremely low activity with fructose-6-phosphate. The sequence is that of Nucleoside kinase from Methanocaldococcus jannaschii (strain ATCC 43067 / DSM 2661 / JAL-1 / JCM 10045 / NBRC 100440) (Methanococcus jannaschii).